The chain runs to 345 residues: NADPH dehydrogenase (345 aa).

Position 23 to 26 (23 to 26) interacts with FMN; it reads SPMC. Y28 contacts substrate. FMN is bound by residues A60 and Q102. 164–167 is a substrate binding site; the sequence is HGAH. Residues R215 and 307–308 contribute to the FMN site; that span reads GR.

This sequence belongs to the NADH:flavin oxidoreductase/NADH oxidase family. NamA subfamily. In terms of assembly, homotetramer. FMN serves as cofactor.

The catalysed reaction is A + NADPH + H(+) = AH2 + NADP(+). Catalyzes the reduction of the double bond of an array of alpha,beta-unsaturated aldehydes and ketones. It also reduces the nitro group of nitroester and nitroaromatic compounds. It could have a role in detoxification processes. The sequence is that of NADPH dehydrogenase from Bacillus cereus (strain AH187).